We begin with the raw amino-acid sequence, 227 residues long: 2,3-bisphosphoglycerate-dependent phosphoglycerate mutase (227 aa).

Substrate contacts are provided by residues 8 to 15 (RHGKSVWN), 21 to 22 (TG), Arg-58, 110 to 113 (ERMY), Lys-121, 137 to 138 (RR), and 181 to 182 (GN). His-9 acts as the Tele-phosphohistidine intermediate in catalysis. The active-site Proton donor/acceptor is Glu-110.

Belongs to the phosphoglycerate mutase family. BPG-dependent PGAM subfamily.

It catalyses the reaction (2R)-2-phosphoglycerate = (2R)-3-phosphoglycerate. It participates in carbohydrate degradation; glycolysis; pyruvate from D-glyceraldehyde 3-phosphate: step 3/5. In terms of biological role, catalyzes the interconversion of 2-phosphoglycerate and 3-phosphoglycerate. The sequence is that of 2,3-bisphosphoglycerate-dependent phosphoglycerate mutase from Chlamydia felis (strain Fe/C-56) (Chlamydophila felis).